The chain runs to 347 residues: Protein-arginine kinase (347 aa).

One can recognise a Phosphagen kinase C-terminal domain in the interval 22-247 (LVVSTRIRLA…EQVIQAERHA (226 aa)). Residues 25-29 (STRIR), histidine 85, arginine 118, 169-173 (RASVM), and 200-205 (RGRYGE) contribute to the ATP site. Residues 330-335 (RDRERA) carry the RDXXRA motif of the pArg binding pocket involved in allosteric regulation motif.

The protein belongs to the ATP:guanido phosphotransferase family.

The catalysed reaction is L-arginyl-[protein] + ATP = N(omega)-phospho-L-arginyl-[protein] + ADP + H(+). Its activity is regulated as follows. Appears to be allosterically activated by the binding of pArg-containing polypeptides to the pArg-binding pocket localized in the C-terminal domain of McsB. Functionally, catalyzes the specific phosphorylation of arginine residues in proteins. The sequence is that of Protein-arginine kinase from Exiguobacterium sp. (strain ATCC BAA-1283 / AT1b).